A 171-amino-acid polypeptide reads, in one-letter code: Large ribosomal subunit protein uL10 (171 aa).

It belongs to the universal ribosomal protein uL10 family. As to quaternary structure, part of the ribosomal stalk of the 50S ribosomal subunit. The N-terminus interacts with L11 and the large rRNA to form the base of the stalk. The C-terminus forms an elongated spine to which L12 dimers bind in a sequential fashion forming a multimeric L10(L12)X complex.

Functionally, forms part of the ribosomal stalk, playing a central role in the interaction of the ribosome with GTP-bound translation factors. This Sphingopyxis alaskensis (strain DSM 13593 / LMG 18877 / RB2256) (Sphingomonas alaskensis) protein is Large ribosomal subunit protein uL10.